A 277-amino-acid polypeptide reads, in one-letter code: Ribosomal RNA small subunit methyltransferase G (277 aa).

Residues G128, F133, S188–E189, and R198 contribute to the S-adenosyl-L-methionine site.

The protein belongs to the methyltransferase superfamily. RNA methyltransferase RsmG family.

It localises to the cytoplasm. The enzyme catalyses guanosine(527) in 16S rRNA + S-adenosyl-L-methionine = N(7)-methylguanosine(527) in 16S rRNA + S-adenosyl-L-homocysteine. Specifically methylates the N7 position of guanine in position 527 of 16S rRNA. The sequence is that of Ribosomal RNA small subunit methyltransferase G from Nitrobacter winogradskyi (strain ATCC 25391 / DSM 10237 / CIP 104748 / NCIMB 11846 / Nb-255).